We begin with the raw amino-acid sequence, 325 residues long: LIM and senescent cell antigen-like-containing domain protein 1 (325 aa).

Ala-2 carries the N-acetylalanine modification. LIM zinc-binding domains lie at 10 to 62, 71 to 121, 135 to 184, 193 to 243, and 252 to 303; these read CERC…CEHD, CHQC…CRPC, CQKC…CLPC, CGAC…CETH, and CFHC…CKKC.

In terms of assembly, component of the heterotrimeric IPP (ILK-PINCH-PARVIN) complex composed of ILK, LIMS1/PINCH and PARVA; the complex binds to F-actin via the C-terminal tail of LIMS1 and the N-terminal region of PARVA, promoting F-actin filament bundling. Formation of the IPP complex is dependent on protein kinase C and precedes integrin-mediated cell adhesion and spreading. Competes with LIMS2 for interaction with ILK. Interacts with SH3/SH2 adapter NCK2, thereby linking the complex to cell surface receptors. Interacts (via LIM zinc-binding 5) with TGFB1I1.

Its subcellular location is the cell junction. It is found in the focal adhesion. The protein localises to the cell membrane. Its function is as follows. Within the IPP (ILK-PINCH-PARVIN) complex, binds to F-actin, promoting F-actin bundling, a process required to generate force for actin cytoskeleton reorganization and subsequent dynamic cell adhesion events such as cell spreading and migration. This Mus musculus (Mouse) protein is LIM and senescent cell antigen-like-containing domain protein 1 (Lims1).